The primary structure comprises 150 residues: UPF0102 protein sll0189 (150 aa).

Belongs to the UPF0102 family.

In Synechocystis sp. (strain ATCC 27184 / PCC 6803 / Kazusa), this protein is UPF0102 protein sll0189.